The primary structure comprises 319 residues: Ciliary microtubule inner protein 2A (319 aa).

Belongs to the CIMIP2 family. Microtubule inner protein component of sperm flagellar doublet microtubules.

It localises to the cytoplasm. The protein resides in the cytoskeleton. It is found in the flagellum axoneme. In terms of biological role, microtubule inner protein (MIP) part of the dynein-decorated doublet microtubules (DMTs) in flagellum axoneme. Binds to the intra-tubulin interfaces. This Mus musculus (Mouse) protein is Ciliary microtubule inner protein 2A (Cimip2a).